The sequence spans 195 residues: Ras-related protein Rab-31 (195 aa).

Residues Gly-16, Gly-18, Lys-19, Ser-20, Ser-21, Asp-32, and His-33 each coordinate GTP. Ser-20 contributes to the Mg(2+) binding site. 2 consecutive short sequence motifs (switch) follow at residues 30-42 (HFDH…IGAS) and 63-79 (AGQE…YRGS). Ser-36 carries the post-translational modification Phosphoserine. Positions 38, 64, 119, 122, 150, and 151 each coordinate GTP. Residue Thr-38 participates in Mg(2+) binding. S-geranylgeranyl cysteine attachment occurs at residues Cys-194 and Cys-195.

It belongs to the small GTPase superfamily. Rab family. Interacts with OCRL. Interacts with NGFR. Interacts (in GDP-bound form) with RIN3 and GAPVD1, which function as guanine exchange factors (GEF). Interacts (in GTP-bound form) with EEA1. Interacts with EGFR. Interacts (in GTP-bound form) with APPL2; interaction contributes to or enhances recruitment of APPL2 to the phagosomes; interaction enhances Fc-gamma receptor-mediated phagocytosis through PI3K/Akt signaling in macrophages. Mg(2+) serves as cofactor. As to expression, highest expression in placenta and brain with lower levels in heart and lung. Not detected in liver, skeletal muscle, kidney or pancreas.

It localises to the golgi apparatus. Its subcellular location is the trans-Golgi network. The protein resides in the trans-Golgi network membrane. The protein localises to the early endosome. It is found in the cytoplasmic vesicle. It localises to the phagosome. Its subcellular location is the phagosome membrane. It catalyses the reaction GTP + H2O = GDP + phosphate + H(+). Regulated by guanine nucleotide exchange factors (GEFs) including RIN3 and GAPVD1 which promote the exchange of bound GDP for free GTP. Regulated by GTPase activating proteins (GAPs) which increase the GTP hydrolysis activity. Inhibited by GDP dissociation inhibitors (GDIs) which prevent Rab-GDP dissociation. The small GTPases Rab are key regulators of intracellular membrane trafficking, from the formation of transport vesicles to their fusion with membranes. Rabs cycle between an inactive GDP-bound form and an active GTP-bound form that is able to recruit to membranes different set of downstream effectors directly responsible for vesicle formation, movement, tethering and fusion. Required for the integrity and for normal function of the Golgi apparatus and the trans-Golgi network. Plays a role in insulin-stimulated translocation of GLUT4 to the cell membrane. Plays a role in M6PR transport from the trans-Golgi network to endosomes. Plays a role in the internalization of EGFR from the cell membrane into endosomes. Plays a role in the maturation of phagosomes that engulf pathogens, such as S.aureus and M.tuberculosis. The sequence is that of Ras-related protein Rab-31 from Homo sapiens (Human).